The chain runs to 468 residues: Na(+)/H(+) antiporter NhaA 2 (468 aa).

11 helical membrane-spanning segments follow: residues 31–51 (FLHVQAASGIVLLIATAVALA), 82–102 (LHFWINDGLMTIFFFVVGLEI), 118–138 (VLPVAAALGGMLFPALIYLAL), 147–167 (GWGVPMATDIAFAVGALALLG), 176–196 (VLLLALAIIDDIGAILVIAVF), 199–219 (SSISVTGFGLVAVGIAGVLAL), 226–246 (SPVVYAAAGVVIWAGLLSAGV), 321–341 (PWVAYGIMPLFALANAGVSLG), 353–373 (LLLGVVFGLTMGKPLGIMVAC), 393–413 (VLVVGCVAGIGFTMAIFVAGL), and 422–442 (GVAKLAVLLGSLISALVAMAV).

Belongs to the NhaA Na(+)/H(+) (TC 2.A.33) antiporter family.

It is found in the cell inner membrane. The catalysed reaction is Na(+)(in) + 2 H(+)(out) = Na(+)(out) + 2 H(+)(in). Its function is as follows. Na(+)/H(+) antiporter that extrudes sodium in exchange for external protons. The protein is Na(+)/H(+) antiporter NhaA 2 of Sorangium cellulosum (strain So ce56) (Polyangium cellulosum (strain So ce56)).